The sequence spans 157 residues: Large ribosomal subunit protein bL20 (157 aa).

A disordered region spans residues 121–157; the sequence is TSAPAVSAEAAPKAKAAKKPAAKKAAAKKPVAEEAAK. Over residues 122–134 the composition is skewed to low complexity; sequence SAPAVSAEAAPKA. A compositionally biased stretch (basic residues) spans 135–147; the sequence is KAAKKPAAKKAAA.

Belongs to the bacterial ribosomal protein bL20 family.

In terms of biological role, binds directly to 23S ribosomal RNA and is necessary for the in vitro assembly process of the 50S ribosomal subunit. It is not involved in the protein synthesizing functions of that subunit. The sequence is that of Large ribosomal subunit protein bL20 (rplT) from Arthrobacter sp. (strain FB24).